Here is a 160-residue protein sequence, read N- to C-terminus: Cytochrome b6-f complex subunit 4 (160 aa).

3 helical membrane-spanning segments follow: residues 36–56, 95–115, and 131–151; these read LLYMFPVVILGTIACNVGLAV, LLGVLLMAAVPAGLLTVPFIE, and TVFLIGTVVAIWLGIGATLPI.

The protein belongs to the cytochrome b family. PetD subfamily. As to quaternary structure, the 4 large subunits of the cytochrome b6-f complex are cytochrome b6, subunit IV (17 kDa polypeptide, petD), cytochrome f and the Rieske protein, while the 4 small subunits are petG, petL, petM and petN. The complex functions as a dimer.

Its subcellular location is the plastid. It localises to the chloroplast thylakoid membrane. Functionally, component of the cytochrome b6-f complex, which mediates electron transfer between photosystem II (PSII) and photosystem I (PSI), cyclic electron flow around PSI, and state transitions. The chain is Cytochrome b6-f complex subunit 4 from Coleochaete orbicularis (Charophycean green alga).